A 328-amino-acid chain; its full sequence is Lateral signaling target 1 protein (328 aa).

3 disordered regions span residues 56–78 (SSQDSGVLSSLSSSPQQRSGLRS), 108–135 (PTHYNSRKTSGPPPLMRTPSSGFSSASS), and 177–200 (PVQPSTSTSRNNVSQISGSSRLNG). Residues 178–200 (VQPSTSTSRNNVSQISGSSRLNG) show a composition bias toward polar residues.

As to quaternary structure, interacts with fbf-2; the interaction probably mediates the release of the C-terminal tail of fbf-2 from the RNA-binding domain, thereby altering its RNA-binding affinity.

In terms of biological role, plays a role in germline stem cell maintenance, perhaps acting in concert with mRNA-binding factor fbf-2. May regulate fbf-2 by modulating RNA-binding and perhaps by competition with the intramolecular interaction between the fbf-2 RNA-binding domain and C-terminal tail. In Caenorhabditis elegans, this protein is Lateral signaling target 1 protein.